Here is a 104-residue protein sequence, read N- to C-terminus: UPF0145 protein GTNG_1265 (104 aa).

It belongs to the UPF0145 family.

The chain is UPF0145 protein GTNG_1265 from Geobacillus thermodenitrificans (strain NG80-2).